Here is a 176-residue protein sequence, read N- to C-terminus: Transcription factor E (176 aa).

Residues 5–89 (IDQLMKDMAR…YWKANVDQIN (85 aa)) enclose the HTH TFE/IIEalpha-type domain.

This sequence belongs to the TFE family. Monomer. Interaction with RNA polymerase subunits RpoF and RpoE is necessary for Tfe stimulatory transcription activity. Able to interact with Tbp and RNA polymerase in the absence of DNA promoter. Interacts both with the preinitiation and elongation complexes.

Transcription factor that plays a role in the activation of archaeal genes transcribed by RNA polymerase. Facilitates transcription initiation by enhancing TATA-box recognition by TATA-box-binding protein (Tbp), and transcription factor B (Tfb) and RNA polymerase recruitment. Not absolutely required for transcription in vitro, but particularly important in cases where Tbp or Tfb function is not optimal. It dynamically alters the nucleic acid-binding properties of RNA polymerases by stabilizing the initiation complex and destabilizing elongation complexes. Seems to translocate with the RNA polymerase following initiation and acts by binding to the non template strand of the transcription bubble in elongation complexes. This is Transcription factor E from Metallosphaera sedula (strain ATCC 51363 / DSM 5348 / JCM 9185 / NBRC 15509 / TH2).